Consider the following 172-residue polypeptide: Large ribosomal subunit protein uL10 (172 aa).

This sequence belongs to the universal ribosomal protein uL10 family. In terms of assembly, part of the ribosomal stalk of the 50S ribosomal subunit. The N-terminus interacts with L11 and the large rRNA to form the base of the stalk. The C-terminus forms an elongated spine to which L12 dimers bind in a sequential fashion forming a multimeric L10(L12)X complex.

In terms of biological role, forms part of the ribosomal stalk, playing a central role in the interaction of the ribosome with GTP-bound translation factors. In Leifsonia xyli subsp. xyli (strain CTCB07), this protein is Large ribosomal subunit protein uL10.